The sequence spans 183 residues: Oleosin 5 (183 aa).

A polar region spans residues 1-39; sequence MADVRTHSHQLQVHPQRQHEGGIKVLYPQSGPSSTQVLA. 3 consecutive transmembrane segments (helical) span residues 37 to 57, 66 to 86, and 87 to 107; these read VLAV…AGLT, MLAF…AFVI, and GLAM…LSSM. Residues 40–113 are hydrophobic; sequence VFVGVPIGGT…LSSMSWVLNY (74 aa). The segment at 144 to 183 is disordered; sequence KDAGQTIEDKAHDVREAKTFDVRDRDTTKGTHNVRDTKTT.

This sequence belongs to the oleosin family.

It is found in the lipid droplet. The protein resides in the membrane. In terms of biological role, may have a structural role to stabilize the lipid body during desiccation of the seed by preventing coalescence of the oil. Probably interacts with both lipid and phospholipid moieties of lipid bodies. May also provide recognition signals for specific lipase anchorage in lipolysis during seedling growth. The sequence is that of Oleosin 5 from Arabidopsis thaliana (Mouse-ear cress).